The following is a 123-amino-acid chain: MQNKIQVKSVEKRENALIFCAENSEIEVKELSARNHVLVDSDNLSFLYILENESSFIYVSIPHTCWEAMHEAMNNDVVMFVRVNDIEMELEGLKEEVEYLVENIEGNANYGEELVTAVEKVFL.

Belongs to the UPF0738 family.

This Bacillus cereus (strain ATCC 10987 / NRS 248) protein is UPF0738 protein BCE_1319.